The sequence spans 1761 residues: MARHQAVSQLHFFALILESLFKGADHPLSHFHNVSEDELDELWSWNTPLQPELRFCMHEKVSERAALHPEKIAIDAWDGTLTYGQIEDYSDKLAKLLRLLDDSSNRIIPVLFEKSRWTSVAVLAIMKSGACFALLDPAQPEGRLRAVVQQVNAKIFLSSKAQSTLAARVAPAATIIPISKSKFNKIFSPYTAEQPNTTLPPVSPDQPLYIQFTSGSTGVPKGCILTHSQYTSGAIPRAAAVGYYPHSRVLDFASYAFDVCIDSMLCTLAHGATLCTPSDERRMNDMSGAMRDMQVTFAGMTPSVARTLEVDILNNLESIALGGEGVSISDAMSWGQRTRVVNAYGPSEATVGATINDNVAAKPYITMGKRKGCALWLSDPENHNKLVPVGAVGELLIEGPIVGNGYLNNPSKTKEVFIEDPEFLLKGSKSYPGRHGRIYKTGDLVRFDPDGDGEPIFVGRQDQQVKLRGQRIELAEIEFNMQKHLPPDTQLAAEVIKPSGGGEQTLVAFLVEQKKNGMRHLDGNVFGSFTNKFQDALRDMTKQLFVDLPSYMIPSAYIPLWKMPLLVSCKTDRKRLREIGASVTRQDLRRFNSAVSEKKEATTEMELKLQSLWAKLLGGDADFSANDNFFSMGGDSLRAMRLVAAARDEGVVLSVPDIMLNPTLSSMAEKAKPVSAEETSDVPPFSMIAKDWDVDAARQESARLCGVDVANVEDVYPCTPLQEGLIALSAKFQDAYVAQRVATLPAETAVRLKEAFDTAVQGSPILRTRIINVSGRGLFQVVLKDGQLVREYSTEVSEYLRLDRNEPMDLGTALFRYGLVEEPGSDKMNFVITMHHAVYDGWSMPLVFDRVNRAFNGLHTERPSSFKHFIKHLISLDPADAQQYWKERLEGTIPHQFPPLPQKGYTTQADSLLEHYVTVPTSAHSKLTLATIIRGAWALVSSLYMGHPDIVFGETLTGRSAPVPGIEQIEGPMITTVPIRVRLSLDRPIAEYLQKIHAQTVKQIPHEHLGLQNIRRLSKDARVACDLRTGLVLHPKEDEDWGTVDIRNPANTFLPANDAEGAREALKFNTYALMLVCTLEENGFLVMASFDSNCISKEAMERVLAVLDRIVHAFLGNPESKLGDVAVLDPVEAQDAEAMRPRDVMSDSALGMSPVDGPESMDASLKELSPNEEKLRSILGRILGMKETDIRPSDSFFDLGGDSIGAMRLVSDARAQGLNLTVAQVFQSSSLSDLAASASNEREDKLAEILSRILGMAKTDIKSSDSFFELGGDSIGAMRLVSDARAQGLNITVAQVFQSKSLAELASSAEEETPSQPRVDTDAPFIALGKDANLHSPDRVGLYLENQGWEITNIYPTRPLQQLAVEGTVDLPRYSLRYELIKFATPIDRQRLEQACQELVARNEVLRTVFVKDDGLTLGVVLSSLVVPYTETAVPDGEDADAFIQAGIKQDIEAPKPYGSSFVAFNLFTHTNGASTLVFRISHAQYDEICLPILFEQLSALYAGTTVPETVPFSKHINHVVLDNIPKAIPYWKNLLSGSEMTVLKPSIPLTHRGPADIYKEFDISRRPANITIGSLPTAAWALVLSRRLSRTDVVFGEVVSGRNVGAPNADRIFGPTWQYIPFRVAFSKSWSYLDLLRYVQDQHMTSAAYESMGFSEIVKNCTHWDPESVQWFDTVVHQAPAWVEEMPFGNGVEAKFQTLYPHAEPLREWKCQAFVKDGGRKLGIEIVTFEEWIGEAEGVLEEVGKALECLMEGRAGESIF.

The adenylation stretch occupies residues 63-468; sequence ERAALHPEKI…GRQDQQVKLR (406 aa). The Carrier 1 domain occupies 600–675; sequence EATTEMELKL…SMAEKAKPVS (76 aa). An O-(pantetheine 4'-phosphoryl)serine modification is found at Ser636. The segment at 712–1135 is condensation 1; the sequence is VEDVYPCTPL…AVLDPVEAQD (424 aa). Carrier domains follow at residues 1169–1242 and 1237–1313; these read SPNE…SNER and SASN…EEET. O-(pantetheine 4'-phosphoryl)serine occurs at positions 1203 and 1274. The condensation 2 stretch occupies residues 1354–1677; the sequence is IYPTRPLQQL…ESVQWFDTVV (324 aa).

Belongs to the NRP synthetase family.

It participates in siderophore biosynthesis. Nonribosomal peptide synthetase; part of the gene cluster that mediates the biosynthesis of hydroxamate-containing siderophores that play a critical role in virulence. Cochliobolus heterostrophus produces extracellular coprogen-type siderophores including coprogen, neocoprogen I and neocoprogen II, as well as the intracellular siderophore ferricrocin. The role of extracellular siderophores is to supply iron to the fungus during plant infection, and the intracellular ferricrocin is required for intracellular iron distribution and storage with a crucial role in ascus and ascospore development. SIDA2 catalyzes the conversion of L-ornithine to N(5)-hydroxyornithine, the first step in the biosynthesis of all hydroxamate-containing siderophores. The assembly of extracellular coprogen-type siderophores is then performed by the nonribosomal peptide synthetase (NRPS) NPS6 whereas the intracellular siderophore ferricrocin is assembled by NPS2. This chain is Nonribosomal peptide synthetase 6, found in Cochliobolus heterostrophus (strain C4 / ATCC 48331 / race T) (Southern corn leaf blight fungus).